The following is a 745-amino-acid chain: Cytoskeleton-associated protein 2-like (745 aa).

Positions 25–141 are disordered; that stretch reads AKGKLKSQNT…GELSRKPVGS (117 aa). Residues 30 to 61 show a composition bias toward polar residues; that stretch reads KSQNTKPYLKSKNNCQNQPPSKSTIRPKNDVT. Residues 109–120 show a composition bias toward low complexity; sequence SSNPYSKPSSKS. A compositionally biased stretch (polar residues) spans 121 to 133; it reads FQQCEAGSSTTGE. Positions 185 to 187 match the KEN box motif; it reads KEN. Residues 192–203 show a composition bias toward basic and acidic residues; it reads LTEPERKPDPKL. 3 disordered regions span residues 192-217, 256-276, and 385-411; these read LTEP…YNQT, VKSQ…KPSR, and RFNS…NNGF. Lys-198 participates in a covalent cross-link: Glycyl lysine isopeptide (Lys-Gly) (interchain with G-Cter in SUMO1); alternate. A Glycyl lysine isopeptide (Lys-Gly) (interchain with G-Cter in SUMO2); alternate cross-link involves residue Lys-198. Tyr-204 carries the post-translational modification Phosphotyrosine. Over residues 389 to 411 the composition is skewed to polar residues; the sequence is AIPSTPSIRPNGTSGNKHNNNGF. Thr-742 bears the Phosphothreonine mark. Ser-745 bears the Phosphoserine mark.

Belongs to the CKAP2 family. Post-translationally, ubiquitinated by the anaphase promoting complex/cyclosome (APC/C).

The protein resides in the cytoplasm. It localises to the cytoskeleton. The protein localises to the spindle pole. Microtubule-associated protein required for mitotic spindle formation and cell-cycle progression in neural progenitor cells. This Homo sapiens (Human) protein is Cytoskeleton-associated protein 2-like (CKAP2L).